We begin with the raw amino-acid sequence, 328 residues long: UPF0421 protein SAV1889 (328 aa).

The next 4 helical transmembrane spans lie at 19-39 (IAIF…IYAI), 61-81 (LPAT…FGDQ), 108-128 (VAVL…IFNF), and 132-152 (TLTA…VFPP).

This sequence belongs to the UPF0421 family.

Its subcellular location is the cell membrane. In Staphylococcus aureus (strain Mu50 / ATCC 700699), this protein is UPF0421 protein SAV1889.